The chain runs to 225 residues: Thymidylate kinase (225 aa).

Position 10–17 (10–17) interacts with ATP; that stretch reads GVEGGGKT.

It belongs to the thymidylate kinase family.

It carries out the reaction dTMP + ATP = dTDP + ADP. Its function is as follows. Phosphorylation of dTMP to form dTDP in both de novo and salvage pathways of dTTP synthesis. This is Thymidylate kinase from Trichodesmium erythraeum (strain IMS101).